A 221-amino-acid polypeptide reads, in one-letter code: Queuosine precursor transporter (221 aa).

Over 1–12 the chain is Cytoplasmic; the sequence is MNVFSQTQRYKA. A helical transmembrane segment spans residues 13 to 33; it reads LFWLSLFHLLVITSSNYLVQL. A topological domain (periplasmic) is located at residue P34. A helical transmembrane segment spans residues 35–55; sequence VSILGFHTTWGAFSFPFIFLA. Topologically, residues 56–70 are cytoplasmic; it reads TDLTVRIFGAPLARR. Residues 71 to 91 form a helical membrane-spanning segment; that stretch reads IIFAVMIPALLISYVISSLFY. The Periplasmic portion of the chain corresponds to 92–97; that stretch reads MGSWQG. A helical transmembrane segment spans residues 98–118; that stretch reads FGALAHFNLFVARIATASFMA. The Cytoplasmic portion of the chain corresponds to 119–143; it reads YALGQILDVHVFNRLRQSRRWWLAP. A helical transmembrane segment spans residues 144 to 164; the sequence is TASTLFGNVSDTLAFFFIAFW. Residues 165–184 are Periplasmic-facing; the sequence is RSPDAFMAEHWMEIALVDYC. A helical membrane pass occupies residues 185 to 205; sequence FKVLISIVFFLPMYGVLLNML. The Cytoplasmic portion of the chain corresponds to 206–221; sequence LKRLADKSEINALQAS.

The protein belongs to the vitamin uptake transporter (VUT/ECF) (TC 2.A.88) family. Q precursor transporter subfamily.

The protein resides in the cell inner membrane. Involved in the import of queuosine (Q) precursors, required for Q precursor salvage. Transports 7-cyano-7-deazaguanine (preQ(0)) and 7-aminomethyl-7-deazaguanine (preQ(1)), with a preference for preQ(0). The polypeptide is Queuosine precursor transporter (yhhQ) (Escherichia coli (strain K12)).